Here is a 56-residue protein sequence, read N- to C-terminus: Large ribosomal subunit protein bL32 (56 aa).

Basic residues predominate over residues 1–20 (MAVPKKKKSKSKRNHRHAVW). Residues 1–21 (MAVPKKKKSKSKRNHRHAVWK) are disordered.

The protein belongs to the bacterial ribosomal protein bL32 family.

The polypeptide is Large ribosomal subunit protein bL32 (Prochlorococcus marinus (strain MIT 9312)).